The primary structure comprises 684 residues: Glycine--tRNA ligase beta subunit (684 aa).

This sequence belongs to the class-II aminoacyl-tRNA synthetase family. Tetramer of two alpha and two beta subunits.

The protein localises to the cytoplasm. The enzyme catalyses tRNA(Gly) + glycine + ATP = glycyl-tRNA(Gly) + AMP + diphosphate. This is Glycine--tRNA ligase beta subunit from Pseudomonas fluorescens (strain Pf0-1).